Reading from the N-terminus, the 1039-residue chain is MWLRQSSGGGVASAGHGGPLRQRPIDAATDCDPRACYDSFCKHWQQAFEIIQHSAPPSHDDVLGVVSHLDYMVTLLLVELHHCNKVSLPAAEASGPPAAPCLEFLLSENLLDKLYEWACTTGRYANAVRLEQLKLYELLVSHSRHQLLCHEPFLRPLLKILASSQGEIFPPDLEKRLVILLNQLCVVLMQNVHLLDLFFFSAQTQVQEQILNGNVAPPKSGTTTNFIIFSLLIPYVHREGSLGHQARDALLLCMALSQKNSNIGTYIAQYSSICPLLVTGLGGLYSRLPNSIEISSIDWHRITPDDVTEIPELTLFMNALEFCNAVVQVAHEMIKQQLLDFMYQGFIVPVLGPAILQTLKGKHFQTNIDSQISAMSYLDLILRSITEPGLLRAFVRFLLDTEKFDGERILDALVERLNSPDANLCMVTMALFDTLLGLHCEDLMLELLLKFMLPGKHVPISHRHKINKIDPYLNSSEFFLDLSPDVMKRARDLARPKSVHEPVVSDLTPLPSLPSPVMSKTIGANWNYYGVHTGDSLYANIQAYLFEAHWRIAQCQRDCLKWANSYRYQKWPRHGQGRVHAHALELARQFFSEFGGGPIAANETGEKQLDSLQSIGESSGYESFKWRPADEESEATDTTLATTASEADLDHNSSSLSSVLGASGKREAWRTSNNNRNELILTDLDFSEDLFAQGTVSLGPFLNAIWGKLQTFTSNSLYVNLHLTGLITRLAWYPLPLIHSLLLRSDIAITSDTPSFHQVLRILKQQIDAELPVTEDSLEIIDVARSSLIDREFRLANARKGNEGSPMHHSQQQQMVTNSYATLSAATPVQATPTSAYDPFKRSDKKRRSISKSITSMFSRKSASTSTTPPNGSSASSGLSQIYAFFTGAASNLVGNNASNDGRGISQAQTSAGTCETSLSTQPQAGASRTGATATSAAASGSNSSIAGSTLTLSAQSNTTTHSASTLHGLDGGPSTGGFNSEPASLDSVASMGIIASTSGTERSRDLALCAVLMDEWLKELAAIAQEQSVVLVTEQGSL.

Phosphoserine is present on residues S498 and S805. 3 disordered regions span residues 831-877 (ATPT…SASS), 904-945 (GISQ…SNSS), and 957-984 (SNTTTHSASTLHGLDGGPSTGGFNSEPA). Polar residues-rich tracts occupy residues 855–877 (TSMFSRKSASTSTTPPNGSSASS) and 904–924 (GISQAQTSAGTCETSLSTQPQ). A compositionally biased stretch (low complexity) spans 925 to 945 (AGASRTGATATSAAASGSNSS). Residues 957–966 (SNTTTHSAST) are compositionally biased toward polar residues.

It belongs to the FHIP family.

The protein is FHIP family protein GG24907 of Drosophila erecta (Fruit fly).